The sequence spans 355 residues: Uroporphyrinogen decarboxylase (355 aa).

Residues 27-31 (RQAGR), Asp78, Tyr155, Ser210, and His328 contribute to the substrate site.

The protein belongs to the uroporphyrinogen decarboxylase family. Homodimer.

Its subcellular location is the cytoplasm. It carries out the reaction uroporphyrinogen III + 4 H(+) = coproporphyrinogen III + 4 CO2. The protein operates within porphyrin-containing compound metabolism; protoporphyrin-IX biosynthesis; coproporphyrinogen-III from 5-aminolevulinate: step 4/4. Its function is as follows. Catalyzes the decarboxylation of four acetate groups of uroporphyrinogen-III to yield coproporphyrinogen-III. This chain is Uroporphyrinogen decarboxylase, found in Pseudomonas fluorescens (strain ATCC BAA-477 / NRRL B-23932 / Pf-5).